The chain runs to 445 residues: Cytochrome P450 monooxygenase penB (445 aa).

Cys381 contacts heme.

This sequence belongs to the cytochrome P450 family. Heme serves as cofactor.

It participates in secondary metabolite biosynthesis. The protein operates within alkaloid biosynthesis. It functions in the pathway mycotoxin biosynthesis. In terms of biological role, cytochrome P450 monooxygenase; part of the gene cluster that mediates the biosynthesis of penigequinolones, potent insecticidal alkaloids that contain a highly modified 10-carbon prenyl group. The first stage is catalyzed by the nonribosomal peptide synthetase penN that condenses anthranilic acid and O-methyl-L-tyrosine to produce 4'-methoxycyclopeptin. 4'-methoxycyclopeptin is then converted to 4'-methoxydehydrocyclopeptin by the ketoglutarate-dependent dioxygenase penM through dehydrogenation to form a double bond between C-alpha and C-beta of the O-methyltyrosine side chain. PenM also converts its first product methoxydehydrocyclopeptin to 4'-methoxycyclopenin. The following conversion of 4'methoxycyclopenin into 4'-methoxyviridicatin is catalyzed by the cyclopenase penL. 4'-methoxyviridicatin is the precursor of quinolone natural products, and is further converted to quinolinone B. The prenyltransferase penI then catalyzes the canonical Friedel-Crafts alkylation of quinolinone B with dimethylallyl cation to yield dimethylallyl quinolone, which is subjected to FAD-dependent dehydrogenation by the FAD-linked oxidoreductase penH to yield conjugated aryl diene. The delta(3') double bond then serves as the site of the second alkylation with DMAPP catalyzed by the prenyltransferase penG to yield a carbenium ion intermediate, which can be attacked by H(2)O to yield a styrenyl quinolone containing a C3'-hydroxyprenyl chain, or undergo cyclization to yield yaequinolones J1 and J2. The conversion of the styrenyl quinolone into the tetrahydrofuran-containing yaequinolone C is performed by the FAD-dependent monooxygenase penE and involves epoxidation of the terminal C7'-C8' olefin, followed by epoxide ring opening initiated by the C3' hydroxyl group. The predicted cysteine hydrolase penJ acts as an epoxide hydrolase that enhances the rate of the 5-exo-tet cyclization step, increasing the yield of yaequinolone C. PenF catalyzes the cationic rearrangement of the epoxide formed by penE (before ring opening to produce yaequinolone C) into yaequinolone D. Finally, the short-chain dehydrogenase/reductase (SDR)-like reductase penD, catalyzes both the dehydration of yaequinolone D and the reduction of the resulting oxonium to yield penigequinolone. The chain is Cytochrome P450 monooxygenase penB from Penicillium thymicola.